The chain runs to 173 residues: Adenine phosphoribosyltransferase (173 aa).

Belongs to the purine/pyrimidine phosphoribosyltransferase family. Homodimer.

The protein localises to the cytoplasm. It carries out the reaction AMP + diphosphate = 5-phospho-alpha-D-ribose 1-diphosphate + adenine. The protein operates within purine metabolism; AMP biosynthesis via salvage pathway; AMP from adenine: step 1/1. Its function is as follows. Catalyzes a salvage reaction resulting in the formation of AMP, that is energically less costly than de novo synthesis. The chain is Adenine phosphoribosyltransferase from Desulfosudis oleivorans (strain DSM 6200 / JCM 39069 / Hxd3) (Desulfococcus oleovorans).